The following is a 61-amino-acid chain: MKFLGVKVYRFPLVKYYWPFFVGFGLTFYGVAKIQNAMMDTAEFINDPRHPRFKKGDLEKK.

The chain crosses the membrane as a helical span at residues 13-32; the sequence is LVKYYWPFFVGFGLTFYGVA.

In terms of assembly, F-type ATP synthases have 2 components, the catalytic core F(1) and the membrane-embedded component F(0), linked together by a central stalk and a peripheral stalk. The central stalk, also called rotor shaft, is often seen as part of F(1). The peripheral stalk is seen as part of F(0). F(0) contains the membrane channel next to the rotor. F-type ATP synthases form dimers but each monomer functions independently in ATP generation. The dimer consists of 18 different polypeptides: ATP1 (subunit alpha, part of F(1), 3 molecules per monomer), ATP2 (subunit beta, part of F(1), 3 molecules per monomer), ATP3 (subunit gamma, part of the central stalk), ATP4 (subunit b, part of the peripheral stalk), ATP5/OSCP (subunit 5/OSCP, part of the peripheral stalk), ATP6 (subunit a, part of the peripheral stalk), ATP7 (subunit d, part of the peripheral stalk), ATP8 (subunit 8, part of the peripheral stalk), OLI1 (subunit c, part of the rotor, 10 molecules per monomer), ATP14 (subunit h, part of the peripheral stalk), ATP15 (subunit epsilon, part of the central stalk), ATP16 (subunit delta, part of the central stalk), ATP17 (subunit f, part of the peripheral stalk), ATP18 (subunit i/j, part of the peripheral stalk). Dimer-specific subunits are ATP19 (subunit k, at interface between monomers), ATP20 (subunit g, at interface between monomers), TIM11 (subunit e, at interface between monomers). Also contains subunit L.

The protein localises to the mitochondrion inner membrane. Functionally, mitochondrial membrane ATP synthase (F(1)F(0) ATP synthase or Complex V) produces ATP from ADP in the presence of a proton gradient across the membrane which is generated by electron transport complexes of the respiratory chain. F-type ATP synthases consist of two structural domains, F(1) - containing the extramembraneous catalytic core, and F(0) - containing the membrane proton channel, linked together by a central stalk and a peripheral stalk. During catalysis, ATP synthesis in the catalytic domain of F(1) is coupled via a rotary mechanism of the central stalk subunits to proton translocation. Part of the complex F(0) domain. Minor subunit located with subunit a/ATP6 in the membrane. This Pichia angusta (Yeast) protein is ATP synthase subunit J, mitochondrial.